The sequence spans 145 residues: UPF0735 ACT domain-containing protein CPR_1404 (145 aa).

The ACT domain occupies 69-144; that stretch reads IFNMVVTHEK…GVEKVEFVAM (76 aa).

Belongs to the UPF0735 family.

The sequence is that of UPF0735 ACT domain-containing protein CPR_1404 from Clostridium perfringens (strain SM101 / Type A).